We begin with the raw amino-acid sequence, 294 residues long: Glyceraldehyde-3-phosphate dehydrogenase (294 aa).

The NAD(+) site is built by Asp-19, Arg-63, and Thr-105. Residues 134 to 136, Thr-165, 194 to 195, and Arg-217 contribute to the D-glyceraldehyde 3-phosphate site; these read SCT and TG. The active-site Nucleophile is the Cys-135.

Belongs to the glyceraldehyde-3-phosphate dehydrogenase family. As to quaternary structure, homotetramer.

Its subcellular location is the cytoplasm. It catalyses the reaction D-glyceraldehyde 3-phosphate + phosphate + NAD(+) = (2R)-3-phospho-glyceroyl phosphate + NADH + H(+). Its pathway is carbohydrate degradation; glycolysis; pyruvate from D-glyceraldehyde 3-phosphate: step 1/5. Catalyzes the oxidative phosphorylation of glyceraldehyde 3-phosphate (G3P) to 1,3-bisphosphoglycerate (BPG) using the cofactor NAD. The first reaction step involves the formation of a hemiacetal intermediate between G3P and a cysteine residue, and this hemiacetal intermediate is then oxidized to a thioester, with concomitant reduction of NAD to NADH. The reduced NADH is then exchanged with the second NAD, and the thioester is attacked by a nucleophilic inorganic phosphate to produce BPG. The chain is Glyceraldehyde-3-phosphate dehydrogenase (gap) from Shimwellia blattae (Escherichia blattae).